The sequence spans 502 residues: Maturase K (502 aa).

Belongs to the intron maturase 2 family. MatK subfamily.

The protein localises to the plastid. It localises to the chloroplast. Usually encoded in the trnK tRNA gene intron. Probably assists in splicing its own and other chloroplast group II introns. In Vitis vinifera (Grape), this protein is Maturase K.